The following is a 180-amino-acid chain: Beta-lactoglobulin-1/B (180 aa).

Residues 1-18 form the signal peptide; that stretch reads MKCLLLALGLALACGVQA. Intrachain disulfides connect C84/C178, C124/C137, and C124/C139.

It belongs to the calycin superfamily. Lipocalin family. Under physiological conditions beta-lactoglobulin exists as an equilibrium mixture of monomeric and dimeric forms. Alternate disulfide bonds occur in equal amounts.

It localises to the secreted. Lactoglobulin is the primary component of whey, it binds retinol and is probably involved in the transport of that molecule. This Ovis aries (Sheep) protein is Beta-lactoglobulin-1/B.